The primary structure comprises 473 residues: Sensor histidine kinase YclK (473 aa).

The Cytoplasmic segment spans residues 1-9 (MMKIKYLYQ). A helical membrane pass occupies residues 10–30 (LLLSHISILILAFVIIISLFS). The Extracellular portion of the chain corresponds to 31 to 164 (HFVKEFAYQN…GVEQMVNQVN (134 aa)). The helical transmembrane segment at 165–185 (LYMFYAVISTLVITILVSWLL) threads the bilayer. Residues 186 to 473 (SKFHVKRIQK…IRLPLTAKQQ (288 aa)) are Cytoplasmic-facing. In terms of domain architecture, HAMP spans 187–239 (KFHVKRIQKLREATDKVASGDYDIHLENSYGDEIGVLASDFNIMAKKLKQSRD). The 217-residue stretch at 254–470 (DVSHELKTPL…KFIIRLPLTA (217 aa)) folds into the Histidine kinase domain. Residue His-257 is modified to Phosphohistidine; by autocatalysis.

It is found in the cell membrane. It catalyses the reaction ATP + protein L-histidine = ADP + protein N-phospho-L-histidine.. Its function is as follows. Could be member of the two-component regulatory system YclK/YclJ. Potentially phosphorylates YclJ. This Bacillus subtilis (strain 168) protein is Sensor histidine kinase YclK (yclK).